The following is an 81-amino-acid chain: Large ribosomal subunit protein uL24 (81 aa).

It belongs to the universal ribosomal protein uL24 family. In terms of assembly, part of the 50S ribosomal subunit.

Functionally, one of two assembly initiator proteins, it binds directly to the 5'-end of the 23S rRNA, where it nucleates assembly of the 50S subunit. Its function is as follows. One of the proteins that surrounds the polypeptide exit tunnel on the outside of the subunit. The protein is Large ribosomal subunit protein uL24 of Chloroherpeton thalassium (strain ATCC 35110 / GB-78).